Consider the following 502-residue polypeptide: Probable malate:quinone oxidoreductase (502 aa).

It belongs to the MQO family. The cofactor is FAD.

It carries out the reaction (S)-malate + a quinone = a quinol + oxaloacetate. It participates in carbohydrate metabolism; tricarboxylic acid cycle; oxaloacetate from (S)-malate (quinone route): step 1/1. In Synechococcus sp. (strain CC9605), this protein is Probable malate:quinone oxidoreductase.